The chain runs to 257 residues: Ditrans,polycis-undecaprenyl-diphosphate synthase ((2E,6E)-farnesyl-diphosphate specific) (257 aa).

Aspartate 34 is an active-site residue. Aspartate 34 lines the Mg(2+) pocket. Substrate is bound by residues glycine 35–arginine 38, tryptophan 39, arginine 47, and histidine 51. Asparagine 82 (proton acceptor) is an active-site residue. Substrate is bound by residues tryptophan 83, arginine 85, arginine 201, and arginine 207–serine 209. Glutamate 220 is a binding site for Mg(2+).

It belongs to the UPP synthase family. As to quaternary structure, homodimer. Mg(2+) serves as cofactor.

It catalyses the reaction 8 isopentenyl diphosphate + (2E,6E)-farnesyl diphosphate = di-trans,octa-cis-undecaprenyl diphosphate + 8 diphosphate. In terms of biological role, catalyzes the sequential condensation of isopentenyl diphosphate (IPP) with (2E,6E)-farnesyl diphosphate (E,E-FPP) to yield (2Z,6Z,10Z,14Z,18Z,22Z,26Z,30Z,34E,38E)-undecaprenyl diphosphate (di-trans,octa-cis-UPP). UPP is the precursor of glycosyl carrier lipid in the biosynthesis of bacterial cell wall polysaccharide components such as peptidoglycan and lipopolysaccharide. This chain is Ditrans,polycis-undecaprenyl-diphosphate synthase ((2E,6E)-farnesyl-diphosphate specific), found in Francisella tularensis subsp. tularensis (strain SCHU S4 / Schu 4).